A 445-amino-acid chain; its full sequence is Exodeoxyribonuclease 7 large subunit (445 aa).

It belongs to the XseA family. As to quaternary structure, heterooligomer composed of large and small subunits.

It localises to the cytoplasm. The catalysed reaction is Exonucleolytic cleavage in either 5'- to 3'- or 3'- to 5'-direction to yield nucleoside 5'-phosphates.. Functionally, bidirectionally degrades single-stranded DNA into large acid-insoluble oligonucleotides, which are then degraded further into small acid-soluble oligonucleotides. In Staphylococcus saprophyticus subsp. saprophyticus (strain ATCC 15305 / DSM 20229 / NCIMB 8711 / NCTC 7292 / S-41), this protein is Exodeoxyribonuclease 7 large subunit.